The chain runs to 190 residues: T-cell receptor gamma chain C region 5/10-13 (190 aa).

The tract at residues 1-157 (DKRTDSDFSP…LQVTTTYAFY (157 aa)) is c region. The chain crosses the membrane as a helical span at residues 158-178 (TYLILFFKSMVHLAFVVFCLF). The Cytoplasmic portion of the chain corresponds to 179-190 (RRAAMSCDDQRS).

It is found in the membrane. In Mus musculus (Mouse), this protein is T-cell receptor gamma chain C region 5/10-13.